Consider the following 427-residue polypeptide: Transcobalamin-2 (427 aa).

The first 18 residues, 1–18 (MELLKALLLLSGVLGALA), serve as a signal peptide directing secretion. Cystine bridges form between Cys21–Cys268, Cys116–Cys310, and Cys165–Cys208. Cob(II)alamin is bound by residues 152 to 156 (TSYYQ), His193, 193 to 197 (HLSVD), Asn245, Ser248, Gln292, and 395 to 397 (WQL).

Belongs to the eukaryotic cobalamin transport proteins family. In terms of assembly, interacts with CD320 (via LDL-receptor class A domains).

Its subcellular location is the secreted. Functionally, primary vitamin B12-binding and transport protein. Delivers cobalamin to cells. The polypeptide is Transcobalamin-2 (Tcn2) (Rattus norvegicus (Rat)).